The chain runs to 212 residues: MKNSGILCIISAPSGTGKSTLIHTVIQCDCFVYQTKLSISYTTRIKRPGEIHGKDYYFISKKKFKYMIDKNMFFEYAMIFNHYYGTAKTDIETMLNTGIHIVLNIDWKGAQQIRSKISKNIYTIFILPPSKKELARRLYLRGEDTEKVIVARMGQAMDEISHFKEYDYIIINDNFNIALMHLQSIMLSEQLRIAHQKIRYATLINHLLLPDI.

The Guanylate kinase-like domain occupies 5–187 (GILCIISAPS…ALMHLQSIML (183 aa)). ATP is bound at residue 12-19 (APSGTGKS).

It belongs to the guanylate kinase family.

It is found in the cytoplasm. It catalyses the reaction GMP + ATP = GDP + ADP. Its function is as follows. Essential for recycling GMP and indirectly, cGMP. This chain is Guanylate kinase, found in Blochmanniella pennsylvanica (strain BPEN).